Consider the following 118-residue polypeptide: UPF0134 protein MPN_287 (118 aa).

Belongs to the UPF0134 family.

The protein is UPF0134 protein MPN_287 of Mycoplasma pneumoniae (strain ATCC 29342 / M129 / Subtype 1) (Mycoplasmoides pneumoniae).